The chain runs to 365 residues: Cobalt-precorrin-5B C(1)-methyltransferase (365 aa).

It belongs to the CbiD family.

It carries out the reaction Co-precorrin-5B + S-adenosyl-L-methionine = Co-precorrin-6A + S-adenosyl-L-homocysteine. Its pathway is cofactor biosynthesis; adenosylcobalamin biosynthesis; cob(II)yrinate a,c-diamide from sirohydrochlorin (anaerobic route): step 6/10. Its function is as follows. Catalyzes the methylation of C-1 in cobalt-precorrin-5B to form cobalt-precorrin-6A. The chain is Cobalt-precorrin-5B C(1)-methyltransferase from Moorella thermoacetica (strain ATCC 39073 / JCM 9320).